The following is a 224-amino-acid chain: EEF1A lysine methyltransferase 3 (224 aa).

Residues Trp-58, 84–86 (GAG), Asp-105, Trp-134, and Ala-151 contribute to the S-adenosyl-L-methionine site.

The protein belongs to the methyltransferase superfamily. METTL21 family.

Its subcellular location is the cytoplasm. The protein resides in the cytoskeleton. It localises to the microtubule organizing center. The protein localises to the centrosome. The catalysed reaction is L-lysyl-[protein] + 3 S-adenosyl-L-methionine = N(6),N(6),N(6)-trimethyl-L-lysyl-[protein] + 3 S-adenosyl-L-homocysteine + 3 H(+). It carries out the reaction L-lysyl-[protein] + S-adenosyl-L-methionine = N(6)-methyl-L-lysyl-[protein] + S-adenosyl-L-homocysteine + H(+). The enzyme catalyses N(6)-methyl-L-lysyl-[protein] + S-adenosyl-L-methionine = N(6),N(6)-dimethyl-L-lysyl-[protein] + S-adenosyl-L-homocysteine + H(+). It catalyses the reaction N(6),N(6)-dimethyl-L-lysyl-[protein] + S-adenosyl-L-methionine = N(6),N(6),N(6)-trimethyl-L-lysyl-[protein] + S-adenosyl-L-homocysteine + H(+). In terms of biological role, protein-lysine methyltransferase that selectively mono-, di- and trimethylates 'Lys-165' of the translation elongation factors EEF1A1 and EEF1A2 in an aminoacyl-tRNA and GTP-dependent manner. EEF1A1 methylation by EEF1AKMT3 is dynamic as well as inducible by stress conditions, such as ER-stress, and plays a regulatory role on mRNA translation. The polypeptide is EEF1A lysine methyltransferase 3 (Xenopus tropicalis (Western clawed frog)).